We begin with the raw amino-acid sequence, 155 residues long: Small ribosomal subunit protein uS7c (155 aa).

It belongs to the universal ribosomal protein uS7 family. As to quaternary structure, part of the 30S ribosomal subunit.

The protein resides in the plastid. Its subcellular location is the chloroplast. In terms of biological role, one of the primary rRNA binding proteins, it binds directly to 16S rRNA where it nucleates assembly of the head domain of the 30S subunit. The chain is Small ribosomal subunit protein uS7c (rps7) from Spirogyra maxima (Green alga).